Reading from the N-terminus, the 142-residue chain is Large ribosomal subunit protein uL11 (142 aa).

Belongs to the universal ribosomal protein uL11 family. As to quaternary structure, part of the ribosomal stalk of the 50S ribosomal subunit. Interacts with L10 and the large rRNA to form the base of the stalk. L10 forms an elongated spine to which L12 dimers bind in a sequential fashion forming a multimeric L10(L12)X complex. In terms of processing, one or more lysine residues are methylated.

In terms of biological role, forms part of the ribosomal stalk which helps the ribosome interact with GTP-bound translation factors. The protein is Large ribosomal subunit protein uL11 of Rhodopseudomonas palustris (strain HaA2).